Consider the following 115-residue polypeptide: Cyclin-dependent kinase 2-associated protein 1 (115 aa).

The interval 20–25 is interaction with CDK2AP2; that stretch reads GSVHSP. Ser-46 is subject to Phosphoserine; by IKKE.

Belongs to the CDK2AP family. As to quaternary structure, homodimer. Component of the nucleosome remodeling and deacetylase (NuRD) repressor complex, composed of core proteins MTA1, MTA2, MTA3, RBBP4, RBBP7, HDAC1, HDAC2, MBD2, MBD3, and peripherally associated proteins CDK2AP1, CDK2AP2, GATAD2A, GATAD2B, CHD3, CHD4 and CHD5. The exact stoichiometry of the NuRD complex is unknown, and some subunits such as MBD2 and MBD3, GATAD2A and GATAD2B, and CHD3, CHD4 and CHD5 define mutually exclusive NuRD complexes. Interacts with monomeric unphosphorylated CDK2. Interacts with CDK2AP2. Interacts with GATAD2A. Interacts with HDAC1. Interacts with HDAC2. Interacts with MBD2. Interacts with MBD3. Interacts with RBBP4. Interacts with RBBP7. In terms of processing, phosphorylated in vitro by IKBKE at Ser-46.

It is found in the nucleus. The protein resides in the chromosome. Functionally, inhibitor of cyclin-dependent kinase CDK2. Also acts as a component of the histone deacetylase NuRD complex which participates in the remodeling of chromatin. The polypeptide is Cyclin-dependent kinase 2-associated protein 1 (CDK2AP1) (Homo sapiens (Human)).